Reading from the N-terminus, the 233-residue chain is Lectin (233 aa).

N-linked (GlcNAc...) asparagine glycosylation is found at Asn-26 and Asn-108. Glu-118 and Asp-120 together coordinate Mn(2+). Residues Asp-120, Trp-122, Asn-124, and Glu-129 each coordinate Ca(2+). Mn(2+) is bound by residues Glu-129 and His-134.

It belongs to the leguminous lectin family. In terms of assembly, monomer.

It is found in the secreted. Its function is as follows. Has metal-independent hemagglutinating activity towards erythrocytes from rabbit and human. Hemagglutinating activity is inhibited by glycoproteins fetuin, asialo-fetuin, thyroglobulin and azocasein but not by free carbohydrates. Inhibits ADP- and epinephrin-induced but not collagen-, fibrinogen, thrombin- or arachidonic acid-induced platelet aggregation in vitro. Has anticoagulant activity in vitro. The polypeptide is Lectin (Bauhinia forficata (Brazilian orchid-tree)).